The following is a 507-amino-acid chain: Cytochrome P450 71D2 (507 aa).

2 consecutive transmembrane segments (helical) span residues 6-26 (LPFNLVTFFIFLFFVFLLIYG) and 447-467 (ICPGMTFGLANVHLVLALLLY). Residue Cys-448 coordinates heme.

This sequence belongs to the cytochrome P450 family.

It localises to the membrane. This chain is Cytochrome P450 71D2, found in Catharanthus roseus (Madagascar periwinkle).